A 253-amino-acid chain; its full sequence is Adenosylcobinamide-GDP ribazoletransferase (253 aa).

4 helical membrane-spanning segments follow: residues 33–53 (ISPL…YVLL), 106–126 (IGSG…VALL), 132–152 (FYTI…GLYI), and 178–198 (VLLL…FLVF).

This sequence belongs to the CobS family. Mg(2+) serves as cofactor.

It localises to the cell membrane. It carries out the reaction alpha-ribazole + adenosylcob(III)inamide-GDP = adenosylcob(III)alamin + GMP + H(+). The catalysed reaction is alpha-ribazole 5'-phosphate + adenosylcob(III)inamide-GDP = adenosylcob(III)alamin 5'-phosphate + GMP + H(+). It functions in the pathway cofactor biosynthesis; adenosylcobalamin biosynthesis; adenosylcobalamin from cob(II)yrinate a,c-diamide: step 7/7. Its function is as follows. Joins adenosylcobinamide-GDP and alpha-ribazole to generate adenosylcobalamin (Ado-cobalamin). Also synthesizes adenosylcobalamin 5'-phosphate from adenosylcobinamide-GDP and alpha-ribazole 5'-phosphate. This Saccharolobus islandicus (strain Y.G.57.14 / Yellowstone #1) (Sulfolobus islandicus) protein is Adenosylcobinamide-GDP ribazoletransferase.